A 508-amino-acid chain; its full sequence is Photosystem II CP47 reaction center protein (508 aa).

6 consecutive transmembrane segments (helical) span residues 21-36, 101-115, 140-156, 203-218, 237-252, and 457-472; these read AVHLMHTALVSGWAGS, IVLSGLLFLAAIWHW, GIHLFLSGVLCFGFGAF, IAAGILGILAGLFHLS, VLSSSIAAVFFAAFVV, and TFALLFFFGHIWHGAR.

It belongs to the PsbB/PsbC family. PsbB subfamily. As to quaternary structure, PSII is composed of 1 copy each of membrane proteins PsbA, PsbB, PsbC, PsbD, PsbE, PsbF, PsbH, PsbI, PsbJ, PsbK, PsbL, PsbM, PsbT, PsbX, PsbY, PsbZ, Psb30/Ycf12, at least 3 peripheral proteins of the oxygen-evolving complex and a large number of cofactors. It forms dimeric complexes. Requires Binds multiple chlorophylls. PSII binds additional chlorophylls, carotenoids and specific lipids. as cofactor.

Its subcellular location is the plastid. It is found in the chloroplast thylakoid membrane. One of the components of the core complex of photosystem II (PSII). It binds chlorophyll and helps catalyze the primary light-induced photochemical processes of PSII. PSII is a light-driven water:plastoquinone oxidoreductase, using light energy to abstract electrons from H(2)O, generating O(2) and a proton gradient subsequently used for ATP formation. The sequence is that of Photosystem II CP47 reaction center protein from Anthoceros angustus (Hornwort).